A 118-amino-acid polypeptide reads, in one-letter code: Mitochondrial protein YPR099C (118 aa).

The protein resides in the mitochondrion. Essential for the functional mitochondria and respiratory growth. This is Mitochondrial protein YPR099C from Saccharomyces cerevisiae (strain ATCC 204508 / S288c) (Baker's yeast).